A 477-amino-acid polypeptide reads, in one-letter code: UDP-N-acetylmuramoylalanine--D-glutamate ligase (477 aa).

Position 125–131 (125–131 (GTNGKST)) interacts with ATP.

This sequence belongs to the MurCDEF family.

It is found in the cytoplasm. It catalyses the reaction UDP-N-acetyl-alpha-D-muramoyl-L-alanine + D-glutamate + ATP = UDP-N-acetyl-alpha-D-muramoyl-L-alanyl-D-glutamate + ADP + phosphate + H(+). Its pathway is cell wall biogenesis; peptidoglycan biosynthesis. Functionally, cell wall formation. Catalyzes the addition of glutamate to the nucleotide precursor UDP-N-acetylmuramoyl-L-alanine (UMA). This Rhodospirillum rubrum (strain ATCC 11170 / ATH 1.1.1 / DSM 467 / LMG 4362 / NCIMB 8255 / S1) protein is UDP-N-acetylmuramoylalanine--D-glutamate ligase.